Consider the following 674-residue polypeptide: Protein kinase C delta type (674 aa).

The C2 domain maps to 1 to 106; that stretch reads MAPFLRISFN…KNNGKAEFWL (106 aa). 2 positions are modified to phosphothreonine: T43 and T50. Y64 bears the Phosphotyrosine mark. S130 is subject to Phosphoserine. T141 carries the post-translational modification Phosphothreonine. Y155 is subject to Phosphotyrosine. The segment at 158 to 208 adopts a Phorbol-ester/DAG-type 1 zinc-finger fold; the sequence is NHEFIATFFGQPTFCSVCKEFVWGLNKQGYKCRQCNAAIHKKCIDKIIGRC. A Phosphothreonine modification is found at T218. The Phorbol-ester/DAG-type 2 zinc finger occupies 230-280; it reads PHRFKVYNYMSPTFCDHCGSLLWGLVKQGLKCEDCGMNVHHKCREKVANLC. S299 carries the phosphoserine; by autocatalysis modification. 2 positions are modified to phosphotyrosine; by SRC: Y311 and Y332. Residues 347–601 form the Protein kinase domain; sequence FTFQKVLGKG…TGNIRIHPFF (255 aa). 353-361 is a binding site for ATP; sequence LGKGSFGKV. Y372 is subject to Phosphotyrosine. K376 is an ATP binding site. T449 bears the Phosphothreonine mark. Residue D471 is the Proton acceptor of the active site. Residue S504 is modified to Phosphoserine. T505 bears the Phosphothreonine; by autocatalysis mark. Position 565 is a phosphotyrosine (Y565). The AGC-kinase C-terminal domain maps to 602–673; the sequence is KTINWSLLEK…VNPKFEQFLD (72 aa). Phosphoserine occurs at positions 643, 652, and 662.

The protein belongs to the protein kinase superfamily. AGC Ser/Thr protein kinase family. PKC subfamily. In terms of assembly, interacts with PDPK1 (via N-terminal region). Interacts with RAD9A. Interacts with CDCP1. Interacts with MUC1. Interacts with VASP. Interacts with CAVIN3. Interacts with PRKD2 (via N-terminus and zing-finger domain 1 and 2) in response to oxidative stress; the interaction is independent of PRKD2 tyrosine phosphorylation. Interacts with PLSC3; interaction is enhanced by UV irradiation. Post-translationally, autophosphorylated and/or phosphorylated at Thr-505, within the activation loop; phosphorylation at Thr-505 is not a prerequisite for enzymatic activity. Autophosphorylated at Ser-299. Upon TNFSF10/TRAIL treatment, phosphorylated at Tyr-155; phosphorylation is required for its translocation to the endoplasmic reticulum and cleavage by caspase-3. Phosphorylated at Tyr-311, Tyr-332 and Tyr-565; phosphorylation of Tyr-311 and Tyr-565 following thrombin or zymosan stimulation potentiates its kinase activity. Phosphorylated by protein kinase PDPK1; phosphorylation is inhibited by the apoptotic C-terminal cleavage product of PKN2. Phosphorylated at Tyr-311 through a SYK and SRC mechanism downstream of C-type lectin receptors activation, promoting its activation. In terms of processing, proteolytically cleaved into a catalytic subunit and a regulatory subunit by caspase-3 during apoptosis which results in kinase activation. Isoform 1 is highly expressed in developing pro- and pre-B-cells and moderately in mature T-cells. Isoform 2 is highly expressed in testis and ovary and at a lower level in thymocytes, brain and kidney.

The protein resides in the cytoplasm. It localises to the perinuclear region. The protein localises to the nucleus. Its subcellular location is the cell membrane. It is found in the mitochondrion. The protein resides in the endomembrane system. It catalyses the reaction L-seryl-[protein] + ATP = O-phospho-L-seryl-[protein] + ADP + H(+). The catalysed reaction is L-threonyl-[protein] + ATP = O-phospho-L-threonyl-[protein] + ADP + H(+). It carries out the reaction L-tyrosyl-[protein] + ATP = O-phospho-L-tyrosyl-[protein] + ADP + H(+). Novel PKCs (PRKCD, PRKCE, PRKCH and PRKCQ) are calcium-insensitive, but activated by diacylglycerol (DAG) and phosphatidylserine. Three specific sites; Thr-505 (activation loop of the kinase domain), Ser-643 (turn motif) and Ser-662 (hydrophobic region), need to be phosphorylated for its full activation. Activated by caspase-3 (CASP3) cleavage during apoptosis. After cleavage, the pseudosubstrate motif in the regulatory subunit is released from the substrate recognition site of the catalytic subunit, which enables PRKCD to become constitutively activated. The catalytic subunit which displays properties of a sphingosine-dependent protein kinase is activated by D-erythro-sphingosine (Sph) or N,N-dimethyl-D-erythrosphingosine (DMS) or N,N,N-trimethyl-D-erythrosphingosine (TMS), but not by ceramide or Sph-1-P and is strongly inhibited by phosphatidylserine. Its function is as follows. Calcium-independent, phospholipid- and diacylglycerol (DAG)-dependent serine/threonine-protein kinase that plays contrasting roles in cell death and cell survival by functioning as a pro-apoptotic protein during DNA damage-induced apoptosis, but acting as an anti-apoptotic protein during cytokine receptor-initiated cell death, is involved in tumor suppression, is required for oxygen radical production by NADPH oxidase and acts as a positive or negative regulator in platelet functional responses. Negatively regulates B cell proliferation and also has an important function in self-antigen induced B cell tolerance induction. Upon DNA damage, activates the promoter of the death-promoting transcription factor BCLAF1/Btf to trigger BCLAF1-mediated p53/TP53 gene transcription and apoptosis. In response to oxidative stress, interact with and activate CHUK/IKKA in the nucleus, causing the phosphorylation of p53/TP53. In the case of ER stress or DNA damage-induced apoptosis, can form a complex with the tyrosine-protein kinase ABL1 which trigger apoptosis independently of p53/TP53. In cytosol can trigger apoptosis by activating MAPK11 or MAPK14, inhibiting AKT1 and decreasing the level of X-linked inhibitor of apoptosis protein (XIAP), whereas in nucleus induces apoptosis via the activation of MAPK8 or MAPK9. Upon ionizing radiation treatment, is required for the activation of the apoptosis regulators BAX and BAK, which trigger the mitochondrial cell death pathway. Can phosphorylate MCL1 and target it for degradation which is sufficient to trigger for BAX activation and apoptosis. Is required for the control of cell cycle progression both at G1/S and G2/M phases. Mediates phorbol 12-myristate 13-acetate (PMA)-induced inhibition of cell cycle progression at G1/S phase by up-regulating the CDK inhibitor CDKN1A/p21 and inhibiting the cyclin CCNA2 promoter activity. In response to UV irradiation can phosphorylate CDK1, which is important for the G2/M DNA damage checkpoint activation. Can protect glioma cells from the apoptosis induced by TNFSF10/TRAIL, probably by inducing increased phosphorylation and subsequent activation of AKT1. Can also act as tumor suppressor upon mitogenic stimulation with PMA or TPA. In N-formyl-methionyl-leucyl-phenylalanine (fMLP)-treated cells, is required for NCF1 (p47-phox) phosphorylation and activation of NADPH oxidase activity, and regulates TNF-elicited superoxide anion production in neutrophils, by direct phosphorylation and activation of NCF1 or indirectly through MAPK1/3 (ERK1/2) signaling pathways. Involved in antifungal immunity by mediating phosphorylation and activation of CARD9 downstream of C-type lectin receptors activation, promoting interaction between CARD9 and BCL10, followed by activation of NF-kappa-B and MAP kinase p38 pathways. May also play a role in the regulation of NADPH oxidase activity in eosinophil after stimulation with IL5, leukotriene B4 or PMA. In collagen-induced platelet aggregation, acts a negative regulator of filopodia formation and actin polymerization by interacting with and negatively regulating VASP phosphorylation. Downstream of PAR1, PAR4 and CD36/GP4 receptors, regulates differentially platelet dense granule secretion; acts as a positive regulator in PAR-mediated granule secretion, whereas it negatively regulates CD36/GP4-mediated granule release. Phosphorylates MUC1 in the C-terminal and regulates the interaction between MUC1 and beta-catenin. The catalytic subunit phosphorylates 14-3-3 proteins (YWHAB, YWHAZ and YWHAH) in a sphingosine-dependent fashion. Phosphorylates ELAVL1 in response to angiotensin-2 treatment. Phosphorylates mitochondrial phospholipid scramblase 3 (PLSCR3), resulting in increased cardiolipin expression on the mitochondrial outer membrane which facilitates apoptosis. Phosphorylates SMPD1 which induces SMPD1 secretion. The sequence is that of Protein kinase C delta type from Mus musculus (Mouse).